Consider the following 83-residue polypeptide: MKTLLLTLVVLTIVCLDLGHTRICLNQQSSEPQTTETCPNGEDTCYNKTWNTHRGSRTDRGCGCPKVKPGINLRCCKTDKCNQ.

The first 21 residues, 1-21 (MKTLLLTLVVLTIVCLDLGHT), serve as a signal peptide directing secretion. Intrachain disulfides connect C24/C45, C38/C62, C64/C75, and C76/C81.

It belongs to the three-finger toxin family. Short-chain subfamily. Type I alpha-neurotoxin sub-subfamily. As to expression, expressed by the venom gland.

The protein localises to the secreted. Its function is as follows. Binds to muscle nicotinic acetylcholine receptor (nAChR) and inhibit acetylcholine from binding to the receptor, thereby impairing neuromuscular transmission. This chain is Neurotoxin 3FTx-RI, found in Bungarus fasciatus (Banded krait).